Consider the following 326-residue polypeptide: Adenosine receptor A1 (326 aa).

Topologically, residues 1 to 10 (MPPAISAFQA) are extracellular. The chain crosses the membrane as a helical span at residues 11–33 (AYIGIEVLIALVSVPGNVLVIWA). Topologically, residues 34–46 (VKVNQALRDATFC) are cytoplasmic. The chain crosses the membrane as a helical span at residues 47–69 (FIVSLAVADVAVGALVIPLAILI). The Extracellular portion of the chain corresponds to 70–80 (NIGPRTYFHTC). Residues C80 and C169 are joined by a disulfide bond. A helical membrane pass occupies residues 81 to 102 (LMVACPVLILTQSSILALLAIA). At 103 to 123 (VDRYLRVKIPLRYKTVVTPRR) the chain is on the cytoplasmic side. The helical transmembrane segment at 124–146 (AAVAIAGCWILSFVVGLTPLFGW) threads the bilayer. The Extracellular segment spans residues 147–176 (NRLGEAQRAWAANGSGGEPVIKCEFEKVIS). N159 is a glycosylation site (N-linked (GlcNAc...) asparagine). A helical transmembrane segment spans residues 177 to 201 (MEYMVYFNFFVWVLPPLLLMVLIYL). The Cytoplasmic portion of the chain corresponds to 202 to 235 (EVFYLIRRQLGKKVSASSGDPQKYYGKELKIAKS). A helical membrane pass occupies residues 236–259 (LALILFLFALSWLPLHILNCITLF). Over 260–267 (CPSCRKPS) the chain is Extracellular. A helical transmembrane segment spans residues 268-292 (ILMYIAIFLTHGNSAMNPIVYAFRI). Topologically, residues 293–326 (QKFRVTFLKIWNDHFRCQPTPPVDEDPPEEAPHD) are cytoplasmic. C309 carries S-palmitoyl cysteine lipidation.

This sequence belongs to the G-protein coupled receptor 1 family.

The protein resides in the cell membrane. In terms of biological role, receptor for adenosine. The activity of this receptor is mediated by G proteins which inhibit adenylyl cyclase. In Canis lupus familiaris (Dog), this protein is Adenosine receptor A1 (ADORA1).